Consider the following 222-residue polypeptide: Germin-like protein subfamily 1 member 13 (222 aa).

The first 18 residues, methionine 1 to serine 18, serve as a signal peptide directing secretion. A disulfide bridge connects residues cysteine 32 and cysteine 49. In terms of domain architecture, Cupin type-1 spans serine 63 to glutamate 214. Asparagine 78 is a glycosylation site (N-linked (GlcNAc...) asparagine). Mn(2+) contacts are provided by histidine 111, histidine 113, glutamate 118, and histidine 160.

This sequence belongs to the germin family. In terms of assembly, oligomer (believed to be a pentamer but probably hexamer).

It localises to the secreted. It is found in the extracellular space. The protein localises to the apoplast. In terms of biological role, may play a role in plant defense. Probably has no oxalate oxidase activity even if the active site is conserved. The sequence is that of Germin-like protein subfamily 1 member 13 (GLP6) from Arabidopsis thaliana (Mouse-ear cress).